A 448-amino-acid chain; its full sequence is Exodeoxyribonuclease 7 large subunit (448 aa).

This sequence belongs to the XseA family. In terms of assembly, heterooligomer composed of large and small subunits.

It is found in the cytoplasm. The catalysed reaction is Exonucleolytic cleavage in either 5'- to 3'- or 3'- to 5'-direction to yield nucleoside 5'-phosphates.. Bidirectionally degrades single-stranded DNA into large acid-insoluble oligonucleotides, which are then degraded further into small acid-soluble oligonucleotides. The protein is Exodeoxyribonuclease 7 large subunit of Shewanella sp. (strain MR-4).